A 263-amino-acid chain; its full sequence is MWEFRSFSFWRAVFAEFFGTMFYVFFGLGASLKWAAGPANVLVIALAFGLVLATMVQSIGHVSGAHINPAVTFAFLIGSQMSLFRAIFYIAAQLLGAVAGAAVLYGVTPAAIRGNLALNTLHPGVSLGQATTVEIFLTLQFVLCIFATYDERRNGRLGSVSLAIGFSLTLGHLFGLYYTGASMNPARSFAPAVLTRNFTNHWVYWVGPIIGGALGGLVYDFILFPRMRGLSERLSILKGARPAEPEGQQEATGEPIELKTQSL.

Over 1-9 the chain is Cytoplasmic; the sequence is MWEFRSFSF. A helical transmembrane segment spans residues 10 to 29; the sequence is WRAVFAEFFGTMFYVFFGLG. The Extracellular portion of the chain corresponds to 30–41; that stretch reads ASLKWAAGPANV. A helical transmembrane segment spans residues 42-59; the sequence is LVIALAFGLVLATMVQSI. Residues 60-61 are Cytoplasmic-facing; it reads GH. The segment at residues 62–77 is an intramembrane region (discontinuously helical); sequence VSGAHINPAVTFAFLI. Positions 68 to 70 match the NPA 1 motif; sequence NPA. Over 78–82 the chain is Cytoplasmic; sequence GSQMS. The chain crosses the membrane as a helical span at residues 83–106; sequence LFRAIFYIAAQLLGAVAGAAVLYG. At 107–127 the chain is on the extracellular side; the sequence is VTPAAIRGNLALNTLHPGVSL. A helical transmembrane segment spans residues 128 to 148; sequence GQATTVEIFLTLQFVLCIFAT. Over 149 to 156 the chain is Cytoplasmic; the sequence is YDERRNGR. Residues 157–175 form a helical membrane-spanning segment; the sequence is LGSVSLAIGFSLTLGHLFG. Residues 176–178 are Extracellular-facing; it reads LYY. Positions 179 to 193 form an intramembrane region, discontinuously helical; that stretch reads TGASMNPARSFAPAV. The NPA 2 signature appears at 184–186; it reads NPA. The Extracellular segment spans residues 194 to 200; it reads LTRNFTN. A helical membrane pass occupies residues 201–222; the sequence is HWVYWVGPIIGGALGGLVYDFI. The Cytoplasmic segment spans residues 223–263; sequence LFPRMRGLSERLSILKGARPAEPEGQQEATGEPIELKTQSL. The interaction with CALM stretch occupies residues 227 to 237; the sequence is MRGLSERLSIL. The tract at residues 241–263 is disordered; the sequence is RPAEPEGQQEATGEPIELKTQSL.

This sequence belongs to the MIP/aquaporin (TC 1.A.8) family. Homotetramer; each monomer provides an independent water pore. Two homotetramers on opposing membranes can dimerize, forming a cell-cell junction. Interacts with CALM; the calcium-calmodulin/CALM complex interacts with the cytoplasmic domains of two aquaporins, leading to channel closure.

The protein localises to the cell membrane. It is found in the cell junction. The enzyme catalyses H2O(in) = H2O(out). With respect to regulation, the water channel activity is inhibited by calcium through calmodulin/CALM. Aquaporins form homotetrameric transmembrane channels, with each monomer independently mediating water transport across the plasma membrane along its osmotic gradient. Specifically expressed in lens fiber cells, this aquaporin is crucial for maintaining lens water homeostasis and transparency. Beyond water permeability, it also acts as a cell-to-cell adhesion molecule, forming thin junctions between lens fiber cells that are essential for maintaining the ordered structure and transparency of the lens. The sequence is that of Lens fiber major intrinsic protein from Lithobates pipiens (Northern leopard frog).